Reading from the N-terminus, the 545-residue chain is Sulfite oxidase, mitochondrial (545 aa).

The N-terminal 79 residues, 1-79 (MLLLHRAVVL…YQDHRCRAAQ (79 aa)), are a transit peptide targeting the mitochondrion. The region spanning 82 to 161 (THIYTKEEVS…LAQYKIGELN (80 aa)) is the Cytochrome b5 heme-binding domain. Histidine 118 contributes to the heme b binding site. Residue serine 123 is modified to Phosphoserine. Positions 143, 145, and 147 each coordinate heme b. The interval 165-174 (KVAPTVETSD) is hinge. The moco domain stretch occupies residues 175-401 (PYADDPVRHP…YSHWQRRDYK (227 aa)). Mo-molybdopterin-binding positions include 215-219 (FTRNH), cysteine 264, aspartate 322, histidine 361, arginine 366, and 377-379 (HVK). Positions 402–538 (GFSPSVDWET…RGVLSNAWHR (137 aa)) are homodimerization.

In terms of assembly, homodimer. The cofactor is heme b. Mo-molybdopterin is required as a cofactor.

It is found in the mitochondrion intermembrane space. It catalyses the reaction sulfite + O2 + H2O = sulfate + H2O2. It functions in the pathway energy metabolism; sulfur metabolism. Catalyzes the oxidation of sulfite to sulfate, the terminal reaction in the oxidative degradation of sulfur-containing amino acids. This chain is Sulfite oxidase, mitochondrial (SUOX), found in Homo sapiens (Human).